Reading from the N-terminus, the 425-residue chain is MNLLIKGGRVIDPSQGIDANLDVLIADGVVLELGQGLAAPEGTPAIDAGGLIVTPGLIDMHVHLRDPGLEYKEDIATGSRSAAAGGFTSVACMPNTSPVIDSKAIASYIINKAKSEALVNVFPIGCITKGGKGESLAEMGELKEAGCVGVSDDGKPVCNSELMRRALEYAKGIGITVISHSEDLALVGEGVMNEGFVSTELGLKGIPWAAEDIAVAREVYLAEFAGAPVHIAHISTVGSARIVRNAKARGVKVTCETAPHYFTLTDEAVRGYDTNAKMNPPLRSAADIEAMKAGLADGTIDAIATDHAPHHPDEKDVEFNVALNGIVGLETSLPLSLKLVEEGRLDLNQLVSLMSCNPAKILGLDRGTLKVGAVGDVTVIDPAKEWQVEAAKLESKSKNSPFLGWKMKGRAVYTVVKGQVVYQAG.

Residues histidine 61 and histidine 63 each contribute to the Zn(2+) site. Residues 63–65 and asparagine 95 contribute to the substrate site; that span reads HLR. Zn(2+) is bound by residues aspartate 153, histidine 180, and histidine 233. Substrate is bound at residue asparagine 279. Aspartate 306 contributes to the Zn(2+) binding site. Aspartate 306 is a catalytic residue. Position 310 (histidine 310) interacts with substrate.

It belongs to the metallo-dependent hydrolases superfamily. DHOase family. Class I DHOase subfamily. It depends on Zn(2+) as a cofactor.

The enzyme catalyses (S)-dihydroorotate + H2O = N-carbamoyl-L-aspartate + H(+). It functions in the pathway pyrimidine metabolism; UMP biosynthesis via de novo pathway; (S)-dihydroorotate from bicarbonate: step 3/3. Its function is as follows. Catalyzes the reversible cyclization of carbamoyl aspartate to dihydroorotate. This Geobacter sp. (strain M21) protein is Dihydroorotase.